The following is a 242-amino-acid chain: ATP synthase subunit a, chloroplastic (242 aa).

The next 5 membrane-spanning stretches (helical) occupy residues 34–54 (GQVLVVVWFVLALLLLFAVLG), 93–113 (VPFIGTLFLFIFGCNWAGAII), 132–152 (INTTVALALLTSLAYFYAGLS), 188–210 (LFGNVLADELTITVLTSLVPLVI), and 222–242 (GSVQALIFSTLAAAYIAEALE).

It belongs to the ATPase A chain family. In terms of assembly, F-type ATPases have 2 components, CF(1) - the catalytic core - and CF(0) - the membrane proton channel. CF(1) has five subunits: alpha(3), beta(3), gamma(1), delta(1), epsilon(1). CF(0) has four main subunits: a, b, b' and c.

It is found in the plastid. The protein resides in the chloroplast thylakoid membrane. In terms of biological role, key component of the proton channel; it plays a direct role in the translocation of protons across the membrane. The polypeptide is ATP synthase subunit a, chloroplastic (Trieres chinensis (Marine centric diatom)).